Here is a 119-residue protein sequence, read N- to C-terminus: Protein TusC (119 aa).

The protein belongs to the DsrF/TusC family. As to quaternary structure, heterohexamer, formed by a dimer of trimers. The hexameric TusBCD complex contains 2 copies each of TusB, TusC and TusD. The TusBCD complex interacts with TusE.

The protein localises to the cytoplasm. Its function is as follows. Part of a sulfur-relay system required for 2-thiolation of 5-methylaminomethyl-2-thiouridine (mnm(5)s(2)U) at tRNA wobble positions. In Klebsiella pneumoniae subsp. pneumoniae (strain ATCC 700721 / MGH 78578), this protein is Protein TusC.